Consider the following 463-residue polypeptide: Lactadherin (463 aa).

The first 22 residues, 1–22, serve as a signal peptide directing secretion; sequence MQVSRVLAALCGMLLCASGLFA. 2 EGF-like domains span residues 24 to 61 and 64 to 108; these read SGDF…LVCN and ERGP…IHCE. 3 cysteine pairs are disulfide-bonded: Cys28–Cys39, Cys33–Cys49, and Cys51–Cys60. An N-linked (GlcNAc...) asparagine glycan is attached at Asn61. 6 cysteine pairs are disulfide-bonded: Cys68-Cys79, Cys73-Cys96, Cys98-Cys107, Cys148-Cys303, Cys290-Cys294, and Cys308-Cys463. Residues 87–89 carry the Cell attachment site motif; the sequence is RGD. 2 F5/8 type C domains span residues 148-303 and 308-463; these read CSTQ…LLGC and CSEP…LLGC. Asn266 carries an N-linked (GlcNAc...) asparagine glycan. 2 N-linked (GlcNAc...) asparagine glycosylation sites follow: Asn316 and Asn426.

N-glycosylated. Isoform 1 also exists in both an O-glycosylated and a non-O-glycosylated form. In terms of tissue distribution, mammary epithelial cell surfaces and spermatozoan. Isoform 2 is present in brain, heart, kidney and spleen and at low levels in lung, liver, small intestine and testis.

The protein localises to the membrane. Its subcellular location is the secreted. It localises to the cytoplasmic vesicle. It is found in the secretory vesicle. The protein resides in the acrosome membrane. Its function is as follows. Contributes to phagocytic removal of apoptotic cells in many tissues. Specific ligand for the alpha-v/beta-3 and alpha-v/beta-5 receptors. Also binds to phosphatidylserine-enriched cell surfaces in a receptor-independent manner. Zona pellucida-binding protein which may play a role in gamete interaction. Plays an important role in the maintenance of intestinal epithelial homeostasis and the promotion of mucosal healing. Promotes VEGF-dependent neovascularization. The chain is Lactadherin (Mfge8) from Mus musculus (Mouse).